Here is a 216-residue protein sequence, read N- to C-terminus: MASNKAFTLAVANLKGGCGKTTISTNISAGLTQRGRVGLVDADPQGALKHWVDWGSKEADAQVPVLYSDHTDPVQNLKLAQPNHDFVVVDCPPSLDMAITCQLMIECDFILIPVLPSPLDLWASTQTIEMIESARKTNPKLKAALVLNQTEPRSAMTRAMQTTIERLGVPVLTTSVRRRAVYRNAVVEGVSVFQLGARGRSAADEINQILNEVIPS.

Positions 16, 17, 19, 20, 21, 22, and 45 each coordinate ATP. Residue Thr21 coordinates Mg(2+).

The protein belongs to the ParA family. McdA subfamily. In terms of assembly, self-associates, associates with McdB.

The protein resides in the cytoplasm. The protein localises to the nucleoid. The enzyme catalyses ATP + H2O = ADP + phosphate + H(+). Functionally, mcdA and McdB together mediate carboxysome positioning on the nucleoid and prevent their aggregation in the cell. McdA is an ATPase that forms dynamic gradients on the nucleoid in response to adapter protein McdB, which associates with carboxysomes. The interplay between McdA gradients on the nucleoid and McdB-bound carboxysomes result in the equal spacing of Cbs along the cell length. Its function is as follows. Incorrect positioning (aggregation) of carboxysomes results in reduced CO(2) fixation by encapsulated form 1 ribulose-1,5-bisphosphate carboxylase (RuBisCO, cbbL/cbbS), which leads to slower growth. In Halothiobacillus neapolitanus (strain ATCC 23641 / c2) (Thiobacillus neapolitanus), this protein is Maintenance of carboxysome distribution protein A.